The sequence spans 255 residues: 4-hydroxy-tetrahydrodipicolinate reductase (255 aa).

NAD(+)-binding positions include 9–14 (GFKGKM), Asp35, 89–91 (GTT), and 115–118 (APNF). The active-site Proton donor/acceptor is His145. His146 contacts (S)-2,3,4,5-tetrahydrodipicolinate. Lys149 serves as the catalytic Proton donor. Residue 155–156 (GT) coordinates (S)-2,3,4,5-tetrahydrodipicolinate.

This sequence belongs to the DapB family.

Its subcellular location is the cytoplasm. It carries out the reaction (S)-2,3,4,5-tetrahydrodipicolinate + NAD(+) + H2O = (2S,4S)-4-hydroxy-2,3,4,5-tetrahydrodipicolinate + NADH + H(+). The catalysed reaction is (S)-2,3,4,5-tetrahydrodipicolinate + NADP(+) + H2O = (2S,4S)-4-hydroxy-2,3,4,5-tetrahydrodipicolinate + NADPH + H(+). Its pathway is amino-acid biosynthesis; L-lysine biosynthesis via DAP pathway; (S)-tetrahydrodipicolinate from L-aspartate: step 4/4. Catalyzes the conversion of 4-hydroxy-tetrahydrodipicolinate (HTPA) to tetrahydrodipicolinate. The protein is 4-hydroxy-tetrahydrodipicolinate reductase of Streptococcus pneumoniae serotype 4 (strain ATCC BAA-334 / TIGR4).